The following is a 192-amino-acid chain: MTEYLLLLIGTVLVNNFVLVKFLGLCPFMGVSSKLASAIGMSMATTFVLTLASVLSFLTNEFLLQPFSLEYLRTMSFILVIAVVVQFTEMLVQKTSASLHRALGIYLPLITTNCAVLGVALLNINEDHNFIESAIYGFGAAVGFSMVLILFSAMRERLAAADVPLPFRGGAIAMITAGLMSLAFMGFAGLIK.

Transmembrane regions (helical) follow at residues 5 to 25, 38 to 58, 72 to 92, 102 to 122, 134 to 154, and 171 to 191; these read LLLL…FLGL, AIGM…LSFL, LRTM…EMLV, ALGI…VALL, AIYG…FSAM, and AIAM…AGLI.

It belongs to the NqrDE/RnfAE family. The complex is composed of six subunits: RnfA, RnfB, RnfC, RnfD, RnfE and RnfG.

Its subcellular location is the cell inner membrane. Functionally, part of a membrane-bound complex that couples electron transfer with translocation of ions across the membrane. The polypeptide is Ion-translocating oxidoreductase complex subunit A (Shewanella denitrificans (strain OS217 / ATCC BAA-1090 / DSM 15013)).